Reading from the N-terminus, the 290-residue chain is Zinc finger AN1 and C2H2 domain-containing stress-associated protein 16 (290 aa).

2 consecutive AN1-type zinc fingers follow at residues 7 to 55 (PNLG…QKDV) and 95 to 145 (VTKK…KPES). Residues Cys13, Cys18, Cys28, Cys31, Cys36, His39, His45, Cys47, Cys101, Cys106, Cys118, Cys121, Cys126, His129, His135, and Cys137 each contribute to the Zn(2+) site. C2H2-type zinc fingers lie at residues 224–247 (EQCV…EKSH) and 261–284 (DVCP…ERDH).

May be involved in environmental stress response. The polypeptide is Zinc finger AN1 and C2H2 domain-containing stress-associated protein 16 (SAP16) (Oryza sativa subsp. japonica (Rice)).